Consider the following 471-residue polypeptide: Putative multidrug resistance protein MdtD (471 aa).

Topologically, residues 1 to 11 are periplasmic; it reads MTDLPDSTRWR. The helical transmembrane segment at 12-32 threads the bilayer; it reads LWIVAFGFFMQSLDTTIVNTA. Topologically, residues 33 to 48 are cytoplasmic; that stretch reads LPSMAQSLGESPLHMH. A helical transmembrane segment spans residues 49–69; sequence MVIVSYVLTVAVMLPASGWLA. The Periplasmic segment spans residues 70 to 76; sequence DKVGVRN. Residues 77–97 form a helical membrane-spanning segment; sequence IFFTAIVLFTLGSLFCALSGT. The Cytoplasmic segment spans residues 98–101; the sequence is LNEL. A helical membrane pass occupies residues 102–124; the sequence is LLARALQGVGGAMMVPVGRLTVM. Topologically, residues 125-137 are periplasmic; sequence KIVPREQYMAAMT. Residues 138–158 traverse the membrane as a helical segment; the sequence is FVTLPGQVGPLLGPALGGLLV. Topologically, residues 159–164 are cytoplasmic; that stretch reads EYASWH. A helical membrane pass occupies residues 165–185; it reads WIFLINIPVGIIGAIATLMLM. At 186–196 the chain is on the periplasmic side; it reads PNYTMQTRRFD. The helical transmembrane segment at 197 to 217 threads the bilayer; the sequence is LSGFLLLAVGMAVLTLALDGS. Over 218–224 the chain is Cytoplasmic; that stretch reads KGTGLSP. A helical membrane pass occupies residues 225–245; the sequence is LAIAGLVAVGVVALVLYLLHA. Residues 246–262 are Periplasmic-facing; it reads QNNNRALFSLKLFRTRT. A helical transmembrane segment spans residues 263–283; the sequence is FSLGLAGSFAGRIGSGMLPFM. At 284–285 the chain is on the cytoplasmic side; that stretch reads TP. The helical transmembrane segment at 286 to 306 threads the bilayer; it reads VFLQIGLGFSPFHAGLMMIPM. Topologically, residues 307 to 341 are periplasmic; it reads VLGSMGMKRIVVQVVNRFGYRRVLVATTLGLSLVT. Residues 342 to 362 form a helical membrane-spanning segment; it reads LLFMTTALLGWYYVLPFVLFL. Residues 363–395 are Cytoplasmic-facing; sequence QGMVNSTRFSSMNTLTLKDLPDNLASSGNSLLS. A helical membrane pass occupies residues 396–416; it reads MIMQLSMSIGVTIAGLLLGLF. The Periplasmic segment spans residues 417 to 430; the sequence is GSQHVSVDSGTTQT. Residues 431–451 traverse the membrane as a helical segment; that stretch reads VFMYTWLSMASIIALPAFIFA. The Cytoplasmic segment spans residues 452-471; sequence RVPNDTHQNVAISRRKRSAQ.

This sequence belongs to the major facilitator superfamily. TCR/Tet family.

The protein localises to the cell inner membrane. The sequence is that of Putative multidrug resistance protein MdtD from Escherichia coli O6:K15:H31 (strain 536 / UPEC).